Reading from the N-terminus, the 165-residue chain is MNISNINNDIYLGGLGNHSTEEIKNFLIDNNIKCIITIWNFNKLNIKKLNINVKDYMYIHAYDLTNEIIIDYFDITNKFIINKIKEGKKVLIHCYAGISRSASIVINYFMNKYNINYDEAEKIVSKKRNIKPNIFFILQLKFYNSYKNINIIYLIILFAIRYTLK.

The Tyrosine-protein phosphatase domain occupies asparagine 2–isoleucine 149. Cysteine 94 acts as the Phosphocysteine intermediate in catalysis.

It belongs to the protein-tyrosine phosphatase family. Non-receptor class dual specificity subfamily.

The catalysed reaction is O-phospho-L-tyrosyl-[protein] + H2O = L-tyrosyl-[protein] + phosphate. The chain is Putative tyrosine-protein phosphatase AMV078 from Amsacta moorei entomopoxvirus (AmEPV).